The following is a 494-amino-acid chain: Catalase isozyme 2 (494 aa).

Residues 1-29 (MDPCKFRPSSSFDTKTTTTNAGQPVWNDN) are disordered. Polar residues predominate over residues 8-22 (PSSSFDTKTTTTNAG). Catalysis depends on residues histidine 65 and asparagine 138. Tyrosine 348 is a heme binding site.

Belongs to the catalase family. As to quaternary structure, homotetramer. Heme serves as cofactor.

It is found in the peroxisome. The protein localises to the glyoxysome. The enzyme catalyses 2 H2O2 = O2 + 2 H2O. Its function is as follows. Occurs in almost all aerobically respiring organisms and serves to protect cells from the toxic effects of hydrogen peroxide. This chain is Catalase isozyme 2 (CAT2), found in Hordeum vulgare (Barley).